The following is a 110-amino-acid chain: Cytochrome c oxidase subunit 4B (110 aa).

Helical transmembrane passes span 27–47, 50–70, and 88–108; these read YQVL…LTVA, GVGS…QVIF, and LFLY…VTII.

This sequence belongs to the cytochrome c oxidase bacterial subunit 4 family.

It is found in the cell membrane. It catalyses the reaction 4 Fe(II)-[cytochrome c] + O2 + 8 H(+)(in) = 4 Fe(III)-[cytochrome c] + 2 H2O + 4 H(+)(out). This chain is Cytochrome c oxidase subunit 4B (ctaF), found in Bacillus subtilis (strain 168).